The primary structure comprises 196 residues: ATP-dependent Clp protease proteolytic subunit (196 aa).

Residue Ser-96 is the Nucleophile of the active site. Residue His-121 is part of the active site.

This sequence belongs to the peptidase S14 family. In terms of assembly, fourteen ClpP subunits assemble into 2 heptameric rings which stack back to back to give a disk-like structure with a central cavity, resembling the structure of eukaryotic proteasomes.

Its subcellular location is the cytoplasm. The catalysed reaction is Hydrolysis of proteins to small peptides in the presence of ATP and magnesium. alpha-casein is the usual test substrate. In the absence of ATP, only oligopeptides shorter than five residues are hydrolyzed (such as succinyl-Leu-Tyr-|-NHMec, and Leu-Tyr-Leu-|-Tyr-Trp, in which cleavage of the -Tyr-|-Leu- and -Tyr-|-Trp bonds also occurs).. Its function is as follows. Cleaves peptides in various proteins in a process that requires ATP hydrolysis. Has a chymotrypsin-like activity. Plays a major role in the degradation of misfolded proteins. The chain is ATP-dependent Clp protease proteolytic subunit from Streptococcus sanguinis (strain SK36).